A 375-amino-acid chain; its full sequence is MKKVLVVFGTRPEAIKMAPLVKALQADTSMQCGVCVTAQHREMLDQVLRLFDIRPDYDLNVMKPGQDLYELTSNILTGVKSVLESFAPDLVLVHGDTSTTLATTLAAYYKQVPVGHIEAGLRTGNLYSPWPEEANRKVTGSLAALHFAPTERSRRNLLNEGVPADAVVVTGNTVIDALLSVRQRLQTDTALCRHTASLIPYRIGERRIVLVTGHRRESFGDGFERICAALASIARAHPDVDIVYPVHLNPNVREPVGRLLKGIDNIHLIEPLDYLPFVYLMDKAHIILTDSGGIQEEAPSLGKPVLVMRDTTERPEAVEAGTVRLVGTSVDALVDSATTLLNDDSAYEAMSRAHNPYGDGAASARITRAIQAYFA.

Belongs to the UDP-N-acetylglucosamine 2-epimerase family.

Its subcellular location is the cytoplasm. The enzyme catalyses UDP-N-acetyl-alpha-D-glucosamine = UDP-N-acetyl-alpha-D-mannosamine. It participates in glycan metabolism; exopolysaccharide EPS I biosynthesis. May be involved in synthesis of N-acetyltrideoxygalactose, a component of exopolysaccharide EPS I which functions as a virulence factor. The sequence is that of Probable UDP-N-acetylglucosamine 2-epimerase (epsC) from Ralstonia nicotianae (strain ATCC BAA-1114 / GMI1000) (Ralstonia solanacearum).